We begin with the raw amino-acid sequence, 381 residues long: G-protein coupled receptor homolog Q2/3L (381 aa).

Topologically, residues 1-91 (MNYTLSTVSS…HCDDGVDTTS (91 aa)) are extracellular. N2, N15, N19, N41, N50, N56, and N62 each carry an N-linked (GlcNAc...) asparagine; by host glycan. The chain crosses the membrane as a helical span at residues 92 to 112 (FGLITLYSTIFFLGLFGNIIV). The Cytoplasmic portion of the chain corresponds to 113–126 (LTVLRKYKIKTIQD). Residues 127-147 (MFLLNLTLSDLIFVLVFPFNL) form a helical membrane-spanning segment. Topologically, residues 148 to 165 (YDSIAKQWSLGDCLCKFK) are extracellular. A helical membrane pass occupies residues 166–186 (AMFYFVGFYNSMSFITLMSID). Topologically, residues 187–206 (RYLAVVHPVKSMPIRTKRYG) are cytoplasmic. The helical transmembrane segment at 207–227 (IVLSMVVWIVSTIESFPIMLF) threads the bilayer. The Extracellular portion of the chain corresponds to 228–251 (YETKKVYGITYCHVFYNDNAKIWK). The chain crosses the membrane as a helical span at residues 252–272 (LFINFEINIFGMIIPLTILLY). Over 273-294 (CYYKILNTLKTSQTKNKKAIKM) the chain is Cytoplasmic. Residues 295–315 (VFLIVICSVLFLLPFSVTVFV) traverse the membrane as a helical segment. Residues 316–336 (SSLYLLNVFSGCMALRFVNLA) are Extracellular-facing. A helical membrane pass occupies residues 337-357 (VHVAEIVSLCHCFINPLIYAF). Topologically, residues 358 to 381 (CSREFTKKLLRLRTTSSAGSISIG) are cytoplasmic.

It belongs to the G-protein coupled receptor 1 family.

Its subcellular location is the host cell membrane. Functionally, putative chemokine receptor. The polypeptide is G-protein coupled receptor homolog Q2/3L (Ovis aries (Sheep)).